The primary structure comprises 120 residues: Non-specific lipid-transfer protein (120 aa).

The first 26 residues, M1 to G26, serve as a signal peptide directing secretion. Disulfide bonds link C40–C56, C57–C102, and C77–C116.

It belongs to the plant LTP family.

In terms of biological role, plant non-specific lipid-transfer proteins transfer phospholipids as well as galactolipids across membranes. May play a role in wax or cutin deposition in the cell walls of expanding epidermal cells and certain secretory tissues. This chain is Non-specific lipid-transfer protein, found in Gossypium hirsutum (Upland cotton).